The primary structure comprises 242 residues: Pyridoxine 5'-phosphate synthase (242 aa).

Residue N6 coordinates 3-amino-2-oxopropyl phosphate. 8 to 9 (DH) serves as a coordination point for 1-deoxy-D-xylulose 5-phosphate. R17 contributes to the 3-amino-2-oxopropyl phosphate binding site. H42 (proton acceptor) is an active-site residue. 1-deoxy-D-xylulose 5-phosphate-binding residues include R44 and H49. E69 acts as the Proton acceptor in catalysis. T99 contributes to the 1-deoxy-D-xylulose 5-phosphate binding site. H190 functions as the Proton donor in the catalytic mechanism. Residues G191 and 212–213 (GH) each bind 3-amino-2-oxopropyl phosphate.

This sequence belongs to the PNP synthase family. In terms of assembly, homooctamer; tetramer of dimers.

The protein resides in the cytoplasm. It catalyses the reaction 3-amino-2-oxopropyl phosphate + 1-deoxy-D-xylulose 5-phosphate = pyridoxine 5'-phosphate + phosphate + 2 H2O + H(+). Its pathway is cofactor biosynthesis; pyridoxine 5'-phosphate biosynthesis; pyridoxine 5'-phosphate from D-erythrose 4-phosphate: step 5/5. Its function is as follows. Catalyzes the complicated ring closure reaction between the two acyclic compounds 1-deoxy-D-xylulose-5-phosphate (DXP) and 3-amino-2-oxopropyl phosphate (1-amino-acetone-3-phosphate or AAP) to form pyridoxine 5'-phosphate (PNP) and inorganic phosphate. The chain is Pyridoxine 5'-phosphate synthase from Neisseria meningitidis serogroup C.